Consider the following 286-residue polypeptide: MKIINNKFQKITVAIIFSWLIFFVLIPNLLVLAVSFLTRDGSNFYAFPITIENYTNLFNPLYAQVVWNSLSMSGIATIICLLIGYPFAFMMSKIHPKYRPLLLFLVVLPFWTNSLIRIYGMKVFLGVKGILNTMLIDMGILSAPIRILNTEIAVIIGLVYLLLPFMILPLYSAIEKLDNRLLEAARDLGANTFQRFFRVILPLTMPGIIAGCLLVLLPAMGMFYVADLLGGAKVLLVGNVIKSEFLISRNWPFGSAVSIGLTVLMALLIFVYYRANKLLNRKVELE.

Over 1–13 (MKIINNKFQKITV) the chain is Cytoplasmic. Residues 14–33 (AIIFSWLIFFVLIPNLLVLA) traverse the membrane as a helical segment. Residues 34–71 (VSFLTRDGSNFYAFPITIENYTNLFNPLYAQVVWNSLS) lie on the Periplasmic side of the membrane. Residues 66-274 (VWNSLSMSGI…MALLIFVYYR (209 aa)) enclose the ABC transmembrane type-1 domain. A helical transmembrane segment spans residues 72–91 (MSGIATIICLLIGYPFAFMM). At 92–100 (SKIHPKYRP) the chain is on the cytoplasmic side. The chain crosses the membrane as a helical span at residues 101-120 (LLLFLVVLPFWTNSLIRIYG). The Periplasmic portion of the chain corresponds to 121–151 (MKVFLGVKGILNTMLIDMGILSAPIRILNTE). The helical transmembrane segment at 152–171 (IAVIIGLVYLLLPFMILPLY) threads the bilayer. Residues 172–199 (SAIEKLDNRLLEAARDLGANTFQRFFRV) are Cytoplasmic-facing. The helical transmembrane segment at 200–219 (ILPLTMPGIIAGCLLVLLPA) threads the bilayer. The Periplasmic segment spans residues 220-252 (MGMFYVADLLGGAKVLLVGNVIKSEFLISRNWP). A helical membrane pass occupies residues 253–272 (FGSAVSIGLTVLMALLIFVY). Residues 273–286 (YRANKLLNRKVELE) are Cytoplasmic-facing.

Belongs to the binding-protein-dependent transport system permease family. CysTW subfamily.

It is found in the cell inner membrane. Its function is as follows. Required for the activity of the bacterial periplasmic transport system of putrescine and spermidine. The protein is Spermidine/putrescine transport system permease protein PotB (potB) of Haemophilus influenzae (strain ATCC 51907 / DSM 11121 / KW20 / Rd).